We begin with the raw amino-acid sequence, 523 residues long: Sensory neuron membrane protein 1 (523 aa).

At 1 to 11 (MQLPRELKYAA) the chain is on the cytoplasmic side. The helical transmembrane segment at 12-32 (IAGGVALFGLIFGWVLFPTIL) threads the bilayer. At 33-458 (KSQLKKEMAL…HQLFIPKRVV (426 aa)) the chain is on the extracellular side. Asparagine 229 carries an N-linked (GlcNAc...) asparagine glycan. Cystine bridges form between cysteine 268–cysteine 333, cysteine 297–cysteine 352, and cysteine 335–cysteine 341. The N-linked (GlcNAc...) asparagine glycan is linked to asparagine 440. A helical membrane pass occupies residues 459–479 (GVLRWWMVSFGSLGAVIGIVF). The Cytoplasmic segment spans residues 480-523 (HFRDHIMRLAVSGDTKVSKVIPEVEEQKDISVIGQAQEPAKVNI).

Belongs to the CD36 family.

Its subcellular location is the cell membrane. Plays an olfactory role that is not restricted to pheromone sensitivity. The sequence is that of Sensory neuron membrane protein 1 from Helicoverpa assulta (Oriental tobacco budworm).